We begin with the raw amino-acid sequence, 283 residues long: Pantothenate synthetase (283 aa).

Residue 30 to 37 (MGALHEGH) coordinates ATP. Residue His37 is the Proton donor of the active site. Gln61 is a binding site for (R)-pantoate. Gln61 lines the beta-alanine pocket. Residue 147–150 (GMKD) coordinates ATP. Position 153 (Gln153) interacts with (R)-pantoate. Residues Val176 and 184–187 (LSSR) each bind ATP.

Belongs to the pantothenate synthetase family. In terms of assembly, homodimer.

Its subcellular location is the cytoplasm. The catalysed reaction is (R)-pantoate + beta-alanine + ATP = (R)-pantothenate + AMP + diphosphate + H(+). The protein operates within cofactor biosynthesis; (R)-pantothenate biosynthesis; (R)-pantothenate from (R)-pantoate and beta-alanine: step 1/1. In terms of biological role, catalyzes the condensation of pantoate with beta-alanine in an ATP-dependent reaction via a pantoyl-adenylate intermediate. In Endomicrobium trichonymphae, this protein is Pantothenate synthetase.